The sequence spans 685 residues: Glycine--tRNA ligase beta subunit (685 aa).

It belongs to the class-II aminoacyl-tRNA synthetase family. In terms of assembly, tetramer of two alpha and two beta subunits.

It is found in the cytoplasm. The catalysed reaction is tRNA(Gly) + glycine + ATP = glycyl-tRNA(Gly) + AMP + diphosphate. The sequence is that of Glycine--tRNA ligase beta subunit from Azotobacter vinelandii (strain DJ / ATCC BAA-1303).